Consider the following 240-residue polypeptide: MAENGIKHQEVGHKSLLQSDALYQYILETSVYPREPESMKELREVTAKHPWNLMTTSADEGQFLNMLLKLINAKNTMEIGVYTGYSLLATALAIPDDGKILAMDINRENYEIGLPIIEKAGVAHKIEFREGPALPVLDQLVEDKKNHGTYDFIFVDADKDNYINYHKRIIDLVKVGGLIGYDNTLWNGSVVAPPDAPMRKYVRYYRDFVLELNKALAADPRIEICMLPVGDGITLCRRIT.

Substrate is bound at residue lysine 14. Residues threonine 56, glutamate 78, 80–81 (GV), serine 86, aspartate 104, and alanine 133 contribute to the S-adenosyl-L-methionine site. Aspartate 156 lines the substrate pocket. Aspartate 156 contributes to the a divalent metal cation binding site. Aspartate 158 lines the S-adenosyl-L-methionine pocket. Residues aspartate 182 and asparagine 183 each coordinate a divalent metal cation. Asparagine 187 is a substrate binding site.

This sequence belongs to the class I-like SAM-binding methyltransferase superfamily. Cation-dependent O-methyltransferase family. CCoAMT subfamily. The cofactor is Mg(2+). Expression steadily increases from the bottom to the top of the plant.

The enzyme catalyses (E)-caffeoyl-CoA + S-adenosyl-L-methionine = (E)-feruloyl-CoA + S-adenosyl-L-homocysteine + H(+). The protein operates within aromatic compound metabolism; phenylpropanoid biosynthesis. Functionally, methylates caffeoyl-CoA to feruloyl-CoA and 5-hydroxyferuloyl-CoA to sinapoyl-CoA. Plays a role in the synthesis of feruloylated polysaccharides. Involved in the reinforcement of the plant cell wall. Also involved in the responding to wounding or pathogen challenge by the increased formation of cell wall-bound ferulic acid polymers. Methylates 5-hydroxyferulolyl-CoA more efficiently than caffeoyl-CoA. In Nicotiana tabacum (Common tobacco), this protein is Caffeoyl-CoA O-methyltransferase 5 (CCOAOMT5).